We begin with the raw amino-acid sequence, 490 residues long: GTPase Der (490 aa).

2 consecutive EngA-type G domains span residues 3–166 and 203–376; these read PVVA…MEDL and IKLA…DSST. GTP-binding positions include 9–16, 56–60, 118–121, 209–216, 256–260, and 321–324; these read GRPNVGKS, DTGGI, NKTD, DTAGV, and NKWD. One can recognise a KH-like domain in the interval 377-461; the sequence is RRVGTSMLTR…PIRIQFKEGE (85 aa).

This sequence belongs to the TRAFAC class TrmE-Era-EngA-EngB-Septin-like GTPase superfamily. EngA (Der) GTPase family. In terms of assembly, associates with the 50S ribosomal subunit.

Its function is as follows. GTPase that plays an essential role in the late steps of ribosome biogenesis. The polypeptide is GTPase Der (Escherichia coli O17:K52:H18 (strain UMN026 / ExPEC)).